The following is a 623-amino-acid chain: Glutathione import ATP-binding protein GsiA (623 aa).

ABC transporter domains follow at residues 15 to 269 and 314 to 564; these read VENL…RALL and LRVR…RKLL. ATP is bound by residues 49-56 and 357-364; these read GESGSGKS.

This sequence belongs to the ABC transporter superfamily. Glutathione importer (TC 3.A.1.5.11) family. As to quaternary structure, the complex is composed of two ATP-binding proteins (GsiA), two transmembrane proteins (GsiC and GsiD) and a solute-binding protein (GsiB).

It localises to the cell inner membrane. The enzyme catalyses glutathione(out) + ATP + H2O = glutathione(in) + ADP + phosphate + H(+). In terms of biological role, part of the ABC transporter complex GsiABCD involved in glutathione import. Responsible for energy coupling to the transport system. In Escherichia coli O157:H7, this protein is Glutathione import ATP-binding protein GsiA.